The following is a 432-amino-acid chain: Transcriptional adapter 3-A (432 aa).

Disordered stretches follow at residues 90–127 and 275–314; these read HELG…RNMQ and SPVE…TKSL. The segment covering 293–305 has biased composition (polar residues); it reads DGASTSPRSQNKP. Positions 335–398 form a coiled coil; that stretch reads ADDSEDEVLA…NEVMDAFRKI (64 aa).

It belongs to the NGG1 family.

It localises to the nucleus. In terms of biological role, functions as a component of the PCAF complex. The PCAF complex is capable of efficiently acetylating histones in a nucleosomal context. This Xenopus laevis (African clawed frog) protein is Transcriptional adapter 3-A (tada3-a).